The sequence spans 299 residues: Nucleotide-binding protein SAV_6292 (299 aa).

Glycine 23–serine 30 contacts ATP. Residue aspartate 74 to glycine 77 coordinates GTP.

This sequence belongs to the RapZ-like family.

Functionally, displays ATPase and GTPase activities. The protein is Nucleotide-binding protein SAV_6292 of Streptomyces avermitilis (strain ATCC 31267 / DSM 46492 / JCM 5070 / NBRC 14893 / NCIMB 12804 / NRRL 8165 / MA-4680).